An 88-amino-acid chain; its full sequence is Elongation factor 1-beta (88 aa).

It belongs to the EF-1-beta/EF-1-delta family.

Promotes the exchange of GDP for GTP in EF-1-alpha/GDP, thus allowing the regeneration of EF-1-alpha/GTP that could then be used to form the ternary complex EF-1-alpha/GTP/AAtRNA. In Archaeoglobus fulgidus (strain ATCC 49558 / DSM 4304 / JCM 9628 / NBRC 100126 / VC-16), this protein is Elongation factor 1-beta (ef1b).